A 215-amino-acid chain; its full sequence is uncharacterized protein (215 aa).

2 consecutive transmembrane segments (helical) span residues 40–60 (VLFP…FCSL) and 72–92 (LIWF…VGYL).

The protein localises to the mitochondrion membrane. This is an uncharacterized protein from Arabidopsis thaliana (Mouse-ear cress).